A 121-amino-acid polypeptide reads, in one-letter code: MARIAGIDIPREKRVEIALTYIYGIGLTRSKLILSNTGVNPDIRVKDLSDSDVQKLRVAAEDFTVEGDLRRQEGMALKRLQDIGCVRGRRHRMSLPVRGQRTRTNARTRRGSRKTVAGRKK.

Residues 91–121 (HRMSLPVRGQRTRTNARTRRGSRKTVAGRKK) form a disordered region. Positions 100–121 (QRTRTNARTRRGSRKTVAGRKK) are enriched in basic residues.

This sequence belongs to the universal ribosomal protein uS13 family. As to quaternary structure, part of the 30S ribosomal subunit. Forms a loose heterodimer with protein S19. Forms two bridges to the 50S subunit in the 70S ribosome.

Located at the top of the head of the 30S subunit, it contacts several helices of the 16S rRNA. In the 70S ribosome it contacts the 23S rRNA (bridge B1a) and protein L5 of the 50S subunit (bridge B1b), connecting the 2 subunits; these bridges are implicated in subunit movement. Contacts the tRNAs in the A and P-sites. This is Small ribosomal subunit protein uS13 from Prochlorococcus marinus (strain MIT 9515).